The chain runs to 184 residues: Tumor necrosis factor alpha-induced protein 8-like protein 2 (184 aa).

Ser3 carries the post-translational modification Phosphoserine; by MAP3K7.

It belongs to the TNFAIP8 family. TNFAIP8L2 subfamily. In terms of assembly, may interact with CASP8; however, such result is unclear since PubMed:19079267 could not reproduce the interaction with CASP8. Interacts with RAC1. Post-translationally, phosphorylated by TAK1/MAP3K7; this phosphorylation triggers association with BTRC and subsequent ubiquitination and degradation. Ubiquitinated in a BTRC-depdent manner; leading to degradation mediated through the proteasome pathway. As to expression, expressed in T-cells, B-cells, macrophages, neurons in the brain and brainstem, and stratified squamous epithelia of the esophagus, cervix and skin.

It localises to the cytoplasm. The protein resides in the nucleus. It is found in the lysosome. Acts as a negative regulator of innate and adaptive immunity by maintaining immune homeostasis. Plays a regulatory role in the Toll-like signaling pathway by determining the strength of LPS-induced signaling and gene expression. Inhibits TCR-mediated T-cell activation and negatively regulate T-cell function to prevent hyperresponsiveness. Also inhibits autolysosome formation via negatively modulating MTOR activation by interacting with RAC1 and promoting the disassociation of the RAC1-MTOR complex. Plays an essential role in NK-cell biology by acting as a checkpoint and displaying an expression pattern correlating with NK-cell maturation process and by negatively regulating NK-cell maturation and antitumor immunity. Mechanistically, suppresses IL-15-triggered mTOR activity in NK-cells. The polypeptide is Tumor necrosis factor alpha-induced protein 8-like protein 2 (TNFAIP8L2) (Homo sapiens (Human)).